The chain runs to 1025 residues: Presequence protease, mitochondrial (1025 aa).

H90 contributes to the Zn(2+) binding site. The active-site Proton acceptor is the E93. A Zn(2+)-binding site is contributed by H94. E166 is an active-site residue. Zn(2+) is bound at residue E197.

The protein belongs to the peptidase M16 family. PreP subfamily. In terms of assembly, monomer and homodimer; homodimerization is induced by binding of the substrate. Zn(2+) is required as a cofactor.

The protein localises to the mitochondrion intermembrane space. It localises to the mitochondrion matrix. Degrades mitochondrial transit peptides after their cleavage in the intermembrane space or in the matrix, and presequence peptides; clearance of these peptides is required to keep the presequence processing machinery running. Preferentially cleaves the N-terminal side of paired basic amino acid residues. Also degrades other unstructured peptides. May function as an ATP-dependent peptidase as opposed to a metalloendopeptidase. This chain is Presequence protease, mitochondrial (cym1), found in Aspergillus oryzae (strain ATCC 42149 / RIB 40) (Yellow koji mold).